The sequence spans 343 residues: N(4)-bis(aminopropyl)spermidine synthase (343 aa).

The protein belongs to the branched-chain polyamine synthase family.

Its subcellular location is the cytoplasm. It carries out the reaction 2 S-adenosyl 3-(methylsulfanyl)propylamine + spermidine = N(4)-bis(aminopropyl)spermidine + 2 S-methyl-5'-thioadenosine + 2 H(+). Its pathway is amine and polyamine biosynthesis. In terms of biological role, involved in the biosynthesis of branched-chain polyamines, which support the growth of thermophiles under high-temperature conditions. Catalyzes the sequential condensation of spermidine with the aminopropyl groups of decarboxylated S-adenosylmethionines to produce N(4)-bis(aminopropyl)spermidine via N(4)-aminopropylspermidine. This Thermus thermophilus protein is N(4)-bis(aminopropyl)spermidine synthase.